The sequence spans 519 residues: Steroid 17-alpha-hydroxylase/17,20 lyase (519 aa).

C455 contacts heme.

This sequence belongs to the cytochrome P450 family. Requires heme as cofactor.

Its subcellular location is the membrane. The enzyme catalyses a C21-steroid + reduced [NADPH--hemoprotein reductase] + O2 = a 17alpha-hydroxy-C21-steroid + oxidized [NADPH--hemoprotein reductase] + H2O + H(+). It carries out the reaction 17alpha-hydroxyprogesterone + reduced [NADPH--hemoprotein reductase] + O2 = androst-4-ene-3,17-dione + acetate + oxidized [NADPH--hemoprotein reductase] + H2O + 2 H(+). It catalyses the reaction 17alpha-hydroxypregnenolone + reduced [NADPH--hemoprotein reductase] + O2 = 3beta-hydroxyandrost-5-en-17-one + acetate + oxidized [NADPH--hemoprotein reductase] + H2O + 2 H(+). The protein operates within lipid metabolism; steroid biosynthesis. Conversion of pregnenolone and progesterone to their 17-alpha-hydroxylated products and subsequently to dehydroepiandrosterone (DHEA) and androstenedione. Catalyzes both the 17-alpha-hydroxylation and the 17,20-lyase reaction. The sequence is that of Steroid 17-alpha-hydroxylase/17,20 lyase (CYP17A1) from Rana dybowskii (Dybovsky's frog).